Reading from the N-terminus, the 206-residue chain is Large ribosomal subunit protein uL4 (206 aa).

The interval 63–85 (MYKQKGTGSARHGSARAPQFRGG) is disordered.

It belongs to the universal ribosomal protein uL4 family. In terms of assembly, part of the 50S ribosomal subunit.

Functionally, one of the primary rRNA binding proteins, this protein initially binds near the 5'-end of the 23S rRNA. It is important during the early stages of 50S assembly. It makes multiple contacts with different domains of the 23S rRNA in the assembled 50S subunit and ribosome. In terms of biological role, forms part of the polypeptide exit tunnel. This chain is Large ribosomal subunit protein uL4, found in Beijerinckia indica subsp. indica (strain ATCC 9039 / DSM 1715 / NCIMB 8712).